The following is a 105-amino-acid chain: Nucleoid-associated protein RPE_4812 (105 aa).

The protein belongs to the YbaB/EbfC family. As to quaternary structure, homodimer.

Its subcellular location is the cytoplasm. It localises to the nucleoid. In terms of biological role, binds to DNA and alters its conformation. May be involved in regulation of gene expression, nucleoid organization and DNA protection. The protein is Nucleoid-associated protein RPE_4812 of Rhodopseudomonas palustris (strain BisA53).